The chain runs to 185 residues: MINDIYIKSNEKMKVCINNFQIQVNNVRTGRASPELLNSIYVEYFGSKVPLRQISNVVVENYHTLKINIFDDSSTSLIKKAILNSNLDLNPILYGKDIIVPIPGLTEERRTHLIKVIRNNAENARIYIRNIRRDANDKIKNYLKSKIISEDNEHAAQNKIQTMTDDYIKKIDKILSEKEKDLMKF.

It belongs to the RRF family.

The protein resides in the cytoplasm. In terms of biological role, responsible for the release of ribosomes from messenger RNA at the termination of protein biosynthesis. May increase the efficiency of translation by recycling ribosomes from one round of translation to another. This chain is Ribosome-recycling factor, found in Buchnera aphidicola subsp. Schizaphis graminum (strain Sg).